We begin with the raw amino-acid sequence, 131 residues long: Small ribosomal subunit protein uS9 (131 aa).

The protein belongs to the universal ribosomal protein uS9 family.

In Haemophilus ducreyi (strain 35000HP / ATCC 700724), this protein is Small ribosomal subunit protein uS9.